The following is a 101-amino-acid chain: Replication restart protein PriB (101 aa).

The SSB domain occupies 1-101; the sequence is MTTNNLVLAG…LHAENVELKT (101 aa).

This sequence belongs to the PriB family. As to quaternary structure, homodimer. Interacts with PriA and DnaT. Component of the replication restart primosome. Primosome assembly occurs via a 'hand-off' mechanism. PriA binds to replication forks, subsequently PriB then DnaT bind; DnaT then displaces ssDNA to generate the helicase loading substrate.

In terms of biological role, involved in the restart of stalled replication forks, which reloads the replicative helicase on sites other than the origin of replication; the PriA-PriB pathway is the major replication restart pathway. During primosome assembly it facilitates complex formation between PriA and DnaT on DNA; stabilizes PriA on DNA. Stimulates the DNA unwinding activity of PriA helicase. In Shewanella piezotolerans (strain WP3 / JCM 13877), this protein is Replication restart protein PriB.